Consider the following 557-residue polypeptide: Interferon alpha/beta receptor 1 (557 aa).

The signal sequence occupies residues 1–27; sequence MMVVLLGATTLVLVAVAPWVLSAAAGG. Over 28–436 the chain is Extracellular; it reads KNLKSPQKVE…EKTKPGNTSK (409 aa). Fibronectin type-III domains follow at residues 32–126, 127–227, 231–329, and 331–432; these read SPQK…FRKA, QIGP…TVEN, PPEN…TEIQ, and FLLP…TKPG. Residues asparagine 50, asparagine 58, asparagine 81, asparagine 88, asparagine 110, and asparagine 172 are each glycosylated (N-linked (GlcNAc...) asparagine). Cysteine 79 and cysteine 87 form a disulfide bridge. A disulfide bond links cysteine 199 and cysteine 220. N-linked (GlcNAc...) asparagine glycosylation is present at asparagine 254. The cysteines at positions 283 and 291 are disulfide-linked. N-linked (GlcNAc...) asparagine glycans are attached at residues asparagine 313, asparagine 314, asparagine 376, asparagine 416, and asparagine 433. A disulfide bridge connects residues cysteine 403 and cysteine 426. A helical membrane pass occupies residues 437-457; it reads IWLIVGICIALFALPFVIYAA. The Cytoplasmic portion of the chain corresponds to 458 to 557; sequence KVFLRCINYV…TSEELQQDFV (100 aa). Residue cysteine 463 is the site of S-palmitoyl cysteine attachment. A phosphotyrosine; by TYK2 mark is found at tyrosine 466 and tyrosine 481. The tract at residues 491-500 is important for interaction with TYK2; it reads LLSTSEEQIE. Serine 495 is modified (phosphoserine). Residues lysine 501, lysine 525, and lysine 526 each participate in a glycyl lysine isopeptide (Lys-Gly) (interchain with G-Cter in ubiquitin) cross-link. The segment at 516–557 is disordered; the sequence is ETNQTDEDHKKYSSQTSQDSGNYSNEDESESKTSEELQQDFV. Over residues 528-539 the composition is skewed to polar residues; the sequence is SSQTSQDSGNYS. Serine 535 is modified (phosphoserine).

Belongs to the type II cytokine receptor family. As to quaternary structure, heterodimer with IFNAR2; forming the receptor for type I interferon. Interacts with TYK2. Interacts with STAT1 and STAT2; the interaction requires its phosphorylation at Tyr-466. Interacts (serine-phosphorylated form) with FBXW11, the substrate recognition component of a SCF (SKP1-CUL1-F-box protein) E3 ubiquitin-protein ligase complex. Interacts with SHMT2; this promotes interaction with ABRAXAS2 and the BRISC complex. Interacts with TRIM10; this interaction prevents association between IFNAR1 and TYK2. In terms of processing, ubiquitinated, leading to its internalization and degradation. Polyubiquitinated via 'Lys-48'-linked and 'Lys-63'-linked ubiquitin chains, leading to receptor internalization and lysosomal degradation. The 'Lys-63'-linked ubiquitin chains are cleaved off by the BRISC complex. Post-translationally, phosphorylated on tyrosine residues in response to interferon-binding: phosphorylation by TYK2 tyrosine kinase creates docking sites for STAT proteins. Phosphorylated on serine residues in response to interferon binding; this promotes interaction with FBXW11 and ubiquitination. Palmitoylation at Cys-463 is required for the activation of STAT1 and STAT2. IFN receptors are present in all tissues and even on the surface of most IFN-resistant cells. Isoform 1, isoform 2 and isoform 3 are expressed in the IFN-alpha sensitive myeloma cell line U266B1. Isoform 2 and isoform 3 are expressed in the IFN-alpha resistant myeloma cell line U266R. Isoform 1 is not expressed in IFN-alpha resistant myeloma cell line U266R.

It localises to the cell membrane. It is found in the late endosome. The protein localises to the lysosome. Functionally, together with IFNAR2, forms the heterodimeric receptor for type I interferons (including interferons alpha, beta, epsilon, omega and kappa). Type I interferon binding activates the JAK-STAT signaling cascade, resulting in transcriptional activation or repression of interferon-regulated genes that encode the effectors of the interferon response. Mechanistically, type I interferon-binding brings the IFNAR1 and IFNAR2 subunits into close proximity with one another, driving their associated Janus kinases (JAKs) (TYK2 bound to IFNAR1 and JAK1 bound to IFNAR2) to cross-phosphorylate one another. The activated kinases phosphorylate specific tyrosine residues on the intracellular domains of IFNAR1 and IFNAR2, forming docking sites for the STAT transcription factors. STAT proteins are then phosphorylated by the JAKs, promoting their translocation into the nucleus to regulate expression of interferon-regulated genes. Can also act independently of IFNAR2: form an active IFNB1 receptor by itself and activate a signaling cascade that does not involve activation of the JAK-STAT pathway. The polypeptide is Interferon alpha/beta receptor 1 (IFNAR1) (Homo sapiens (Human)).